A 157-amino-acid chain; its full sequence is Glycine-rich RNA-binding protein (157 aa).

Residues 6–84 enclose the RRM domain; sequence YRCFVGGLAW…RNITVNEAQS (79 aa). Positions 70–157 are disordered; sequence QELDGRNITV…YGGGGGGSRW (88 aa). 2 stretches are compositionally biased toward gly residues: residues 86 to 138 and 145 to 157; these read GSGG…GGYG and DGGY…GSRW.

In terms of biological role, may play a role in the biosynthesis and processing of heterogeneous nuclear RNA and in the maturation of specific mRNAs in response to wounding. The chain is Glycine-rich RNA-binding protein from Daucus carota (Wild carrot).